The chain runs to 170 residues: uncharacterized protein (170 aa).

Positions 35 to 57 (EEVMPATAPSTDPAVPKDAQEAD) are disordered.

This is an uncharacterized protein from Candida tsukubaensis (Yeast).